The following is a 103-amino-acid chain: Large ribosomal subunit protein bL21 (103 aa).

Belongs to the bacterial ribosomal protein bL21 family. Part of the 50S ribosomal subunit. Contacts protein L20.

In terms of biological role, this protein binds to 23S rRNA in the presence of protein L20. The polypeptide is Large ribosomal subunit protein bL21 (Lactobacillus johnsonii (strain CNCM I-12250 / La1 / NCC 533)).